The primary structure comprises 425 residues: Melibiose permease (425 aa).

Over 1–13 (MNTTTCTHKDNPN) the chain is Cytoplasmic. Residues 14-34 (FWIFGLFFFLYFFIMATCFPF) traverse the membrane as a helical segment. The Periplasmic portion of the chain corresponds to 35–50 (LPIWLSDIIGLNKTHT). Residues 51 to 71 (GIVFSCISLSAIAFQPVLGVI) form a helical membrane-spanning segment. Residues 72–80 (SDKLGLKKH) lie on the Cytoplasmic side of the membrane. Residues 81-101 (LLWIISVLLFLFAPFFLYVFA) form a helical membrane-spanning segment. Topologically, residues 102 to 107 (PLLKTN) are periplasmic. Residues 108-128 (IWLGALSGGLYIGFVFSAGSG) traverse the membrane as a helical segment. Topologically, residues 129 to 149 (AIEAYIERVSRNSAFEYGKAR) are cytoplasmic. Residues 150-170 (MFGCLGWGLCASTGGILFGID) traverse the membrane as a helical segment. Position 171 (P171) is a topological domain, periplasmic. Residues 172–192 (SYVFWMGSAAALLLMLLLVVA) traverse the membrane as a helical segment. Topologically, residues 193–227 (KPKPNQTAQVMNALGANQPQITAKKVFNLFRQRRM) are cytoplasmic. The helical transmembrane segment at 228–248 (WMFILYVIGVACVYDVFDQQF) threads the bilayer. The Periplasmic portion of the chain corresponds to 249-267 (ATFFKTFFATPQEGTRAFG). The helical transmembrane segment at 268–288 (FATTAGEICNAIIMFCSPWII) threads the bilayer. The Cytoplasmic segment spans residues 289–297 (NRIGAKNTL). The helical transmembrane segment at 298–318 (LIAGLIMATRIIGSSFATTAV) threads the bilayer. The Periplasmic portion of the chain corresponds to 319-325 (EVIALKM). The chain crosses the membrane as a helical span at residues 326–346 (LHALEVPFLLVGAFKYITGVF). Residues 347-353 (DTRLSAT) lie on the Cytoplasmic side of the membrane. The chain crosses the membrane as a helical span at residues 354–374 (IYLIGFQFAKQSAAIFLSAFA). Residues 375–385 (GNMYDRIGFQE) are Periplasmic-facing. A helical membrane pass occupies residues 386–406 (TYLMLGCFVLAITVVSAFTLS). Residues 407–425 (SRQEIAAAAGAAALTSQSR) lie on the Cytoplasmic side of the membrane.

The protein belongs to the major facilitator superfamily. Oligosaccharide:H(+) symporter (OHS) (TC 2.A.1.5) family.

The protein resides in the cell inner membrane. Its function is as follows. Responsible for transport of melibiose into the cell, with the concomitant import of a proton (symport system). Can also transport lactose, and has weak activity with maltose. Cannot transport the analog methyl-1-thio-beta,D-galactopyranoside (TMG). The protein is Melibiose permease of Enterobacter cloacae subsp. cloacae (strain ATCC 13047 / DSM 30054 / NBRC 13535 / NCTC 10005 / WDCM 00083 / NCDC 279-56).